The following is a 454-amino-acid chain: uncharacterized protein (454 aa).

Residues C73, C79, C82, and C154 each coordinate [4Fe-4S] cluster. Residues Q279, F307, D328, and D381 each coordinate S-adenosyl-L-methionine. The active-site Nucleophile is the C408.

It belongs to the class I-like SAM-binding methyltransferase superfamily. RNA M5U methyltransferase family.

This is an uncharacterized protein from Leptospira interrogans serogroup Icterohaemorrhagiae serovar copenhageni (strain Fiocruz L1-130).